Reading from the N-terminus, the 312-residue chain is UDP-N-acetylenolpyruvoylglucosamine reductase (312 aa).

An FAD-binding PCMH-type domain is found at 37–205 (VGGPADALVV…VCAEFALCPG (169 aa)). Residue Arg185 is part of the active site. Residue Ser234 is the Proton donor of the active site. Residue Glu304 is part of the active site.

The protein belongs to the MurB family. The cofactor is FAD.

Its subcellular location is the cytoplasm. The enzyme catalyses UDP-N-acetyl-alpha-D-muramate + NADP(+) = UDP-N-acetyl-3-O-(1-carboxyvinyl)-alpha-D-glucosamine + NADPH + H(+). Its pathway is cell wall biogenesis; peptidoglycan biosynthesis. In terms of biological role, cell wall formation. In Syntrophus aciditrophicus (strain SB), this protein is UDP-N-acetylenolpyruvoylglucosamine reductase.